A 1148-amino-acid chain; its full sequence is Transcription-repair-coupling factor (1148 aa).

The Helicase ATP-binding domain maps to 615–776; the sequence is DMCQPLAMDR…MSGMRDLSII (162 aa). 628-635 is an ATP binding site; sequence GDVGFGKT. Residues 729–732 carry the DEEH box motif; sequence DEEH. One can recognise a Helicase C-terminal domain in the interval 798 to 951; it reads VREAILREIL…GFALATHDLE (154 aa).

In the N-terminal section; belongs to the UvrB family. It in the C-terminal section; belongs to the helicase family. RecG subfamily. Monomer. Interacts with UvrA and RNAP.

The protein resides in the cytoplasm. In terms of biological role, couples transcription and DNA repair by recognizing RNA polymerase (RNAP) stalled at DNA lesions. Mediates ATP-dependent release of RNAP and its truncated transcript from the DNA, and recruitment of nucleotide excision repair machinery to the damaged site. Can also dissociate RNAP that is blocked by low concentration of nucleoside triphosphates or by physical obstruction, such as bound proteins. In addition, can rescue arrested complexes by promoting forward translocation. Has ATPase activity, which is required for removal of stalled RNAP, but seems to lack helicase activity. May act through a translocase activity that rewinds upstream DNA, leading either to translocation or to release of RNAP when the enzyme active site cannot continue elongation. This is Transcription-repair-coupling factor from Escherichia coli (strain K12).